Reading from the N-terminus, the 480-residue chain is 2-phosphoxylose phosphatase 1 (480 aa).

Residues 1 to 6 (MLHRNR) are Cytoplasmic-facing. Residues 7–27 (FLVLLALAGLLAFLSLSLQFF) form a helical; Signal-anchor for type II membrane protein membrane-spanning segment. Residues 28 to 480 (HLIPVSATKN…YYDACHGEGA (453 aa)) lie on the Lumenal side of the membrane. H97 serves as the catalytic Nucleophile. Residues N194, N305, and N354 are each glycosylated (N-linked (GlcNAc...) asparagine). The active-site Proton donor is the D379.

This sequence belongs to the histidine acid phosphatase family. As to quaternary structure, interacts with B3GAT3; the interaction increases the 2-phosphoxylose phosphatase activity of PXYLP1 during completion of linkage region formation in a B3GAT3-mediated manner.

The protein resides in the golgi apparatus membrane. It catalyses the reaction 3-O-[beta-D-GlcA-(1-&gt;3)-beta-D-Gal-(1-&gt;3)-beta-D-Gal-(1-&gt;4)-beta-D-2-O-P-Xyl]-L-seryl-[protein] + H2O = 3-O-(beta-D-GlcA-(1-&gt;3)-beta-D-Gal-(1-&gt;3)-beta-D-Gal-(1-&gt;4)-beta-D-Xyl)-L-seryl-[protein] + phosphate. Responsible for the 2-O-dephosphorylation of xylose in the glycosaminoglycan-protein linkage region of proteoglycans thereby regulating the amount of mature glycosaminoglycan (GAG) chains. Sulfated glycosaminoglycans (GAGs), including heparan sulfate and chondroitin sulfate, are synthesized on the so-called common GAG-protein linkage region (GlcUAbeta1-3Galbeta1-3Galbeta1-4Xylbeta1-O-Ser) of core proteins, which is formed by the stepwise addition of monosaccharide residues by the respective specific glycosyltransferases. Xylose 2-O-dephosphorylation during completion of linkage region formation is a prerequisite for the initiation and efficient elongation of the repeating disaccharide region of GAG chains. The sequence is that of 2-phosphoxylose phosphatase 1 from Mus musculus (Mouse).